A 1007-amino-acid polypeptide reads, in one-letter code: Tolloid-like protein 1 (1007 aa).

Positions 1-25 (MNMPSWLIFLLTGWTFCGNFFACGG) are cleaved as a signal peptide. The propeptide occupies 26–142 (LDYDYPNYEN…GKSKKIRIPR (117 aa)). A disordered region spans residues 115–139 (SGQENTTANSQKVDNNQSGKSKKIR). Polar residues predominate over residues 116–133 (GQENTTANSQKVDNNQSG). A Peptidase M12A domain is found at 143 to 342 (AATSRTERIW…AQARKLYRCP (200 aa)). An N-linked (GlcNAc...) asparagine glycan is attached at Asn164. Disulfide bonds link Cys185–Cys341, Cys205–Cys227, Cys207–Cys208, and Cys344–Cys370. His235 serves as a coordination point for Zn(2+). Residue Glu236 is part of the active site. Zn(2+)-binding residues include His239 and His245. CUB domains are found at residues 344-456 (CGET…YEAI) and 457-569 (CGGE…FLKE). Residues Asn354 and Asn385 are each glycosylated (N-linked (GlcNAc...) asparagine). Intrachain disulfides connect Cys397-Cys419, Cys457-Cys483, Cys510-Cys532, Cys573-Cys585, Cys581-Cys594, Cys596-Cys609, Cys613-Cys639, Cys666-Cys688, Cys729-Cys740, Cys736-Cys749, Cys751-Cys764, Cys769-Cys795, Cys822-Cys844, Cys882-Cys912, and Cys939-Cys961. The region spanning 569 to 610 (EEDECARPDNGGCEQRCVNTLGSYKCSCDPGYELAPDKKSCE) is the EGF-like 1; calcium-binding domain. The CUB 3 domain maps to 613-725 (CGGLLTKLNG…KGFRAHFFSD (113 aa)). N-linked (GlcNAc...) asparagine glycosylation is present at Asn621. The 41-residue stretch at 725 to 765 (DKDECSKDNGGCQHECINTIGSYVCQCRNGFVLHDNKHDCK) folds into the EGF-like 2; calcium-binding domain. 2 consecutive CUB domains span residues 769-881 (CEHR…HSTE) and 882-998 (CGGR…YRSV).

Zn(2+) is required as a cofactor.

The protein localises to the secreted. Its function is as follows. Protease which processes procollagen C-propeptides, such as chordin. Required for the embryonic development. Predominant protease, which in the development, influences dorsal-ventral patterning and skeletogenesis. This is Tolloid-like protein 1 (tll1) from Xenopus laevis (African clawed frog).